The sequence spans 334 residues: Beta-hexosaminidase (334 aa).

Substrate is bound by residues aspartate 62, arginine 70, arginine 131, and 161 to 162 (KH). Histidine 174 functions as the Proton donor/acceptor in the catalytic mechanism. Aspartate 246 serves as the catalytic Nucleophile.

It belongs to the glycosyl hydrolase 3 family. NagZ subfamily.

It is found in the cytoplasm. The enzyme catalyses Hydrolysis of terminal non-reducing N-acetyl-D-hexosamine residues in N-acetyl-beta-D-hexosaminides.. It functions in the pathway cell wall biogenesis; peptidoglycan recycling. Functionally, plays a role in peptidoglycan recycling by cleaving the terminal beta-1,4-linked N-acetylglucosamine (GlcNAc) from peptide-linked peptidoglycan fragments, giving rise to free GlcNAc, anhydro-N-acetylmuramic acid and anhydro-N-acetylmuramic acid-linked peptides. The protein is Beta-hexosaminidase of Tolumonas auensis (strain DSM 9187 / NBRC 110442 / TA 4).